Here is a 416-residue protein sequence, read N- to C-terminus: Lipase (416 aa).

Positions 1–28 (MKCCRIMFVLLGLWFVFGLSVPGGRTEA) are cleaved as a signal peptide. S141 acts as the Nucleophile in catalysis. G314 is a binding site for Ca(2+). Residue D345 is the Charge relay system of the active site. D385 is a binding site for Ca(2+). H386 serves as the catalytic Charge relay system. E388, D393, and P394 together coordinate Ca(2+).

Belongs to the AB hydrolase superfamily. In terms of assembly, homodimer.

The protein localises to the secreted. The enzyme catalyses a triacylglycerol + H2O = a diacylglycerol + a fatty acid + H(+). Its activity is regulated as follows. Activity is inhibited by zinc and iron ions, and activated in vitro in 25% v/v DMSO and acetone. Functionally, triacylglycerol hydrolase that shows hydrolysis preference towards some of the natural oils such as olive, sunflower and corn oils. This Bacillus sp protein is Lipase.